A 307-amino-acid chain; its full sequence is Nucleotide-binding protein Arth_2083 (307 aa).

Residue 30–37 coordinates ATP; it reads GMSGAGRS. Position 81 to 84 (81 to 84) interacts with GTP; the sequence is DVRS.

Belongs to the RapZ-like family.

Displays ATPase and GTPase activities. The protein is Nucleotide-binding protein Arth_2083 of Arthrobacter sp. (strain FB24).